A 336-amino-acid polypeptide reads, in one-letter code: Holliday junction branch migration complex subunit RuvB (336 aa).

Residues 1–183 (MATERLVAGN…FGINSRLEFY (183 aa)) form a large ATPase domain (RuvB-L) region. Residues Leu22, Arg23, Gly64, Lys67, Thr68, Thr69, 130–132 (EDF), Arg173, Tyr183, and Arg220 contribute to the ATP site. Position 68 (Thr68) interacts with Mg(2+). Residues 184 to 254 (QVAELEEIIR…VAREALELLQ (71 aa)) form a small ATPAse domain (RuvB-S) region. The tract at residues 257 to 336 (AAGLDSSDRR…LGIKPEDRLF (80 aa)) is head domain (RuvB-H). 2 residues coordinate DNA: Arg312 and Arg317.

The protein belongs to the RuvB family. As to quaternary structure, homohexamer. Forms an RuvA(8)-RuvB(12)-Holliday junction (HJ) complex. HJ DNA is sandwiched between 2 RuvA tetramers; dsDNA enters through RuvA and exits via RuvB. An RuvB hexamer assembles on each DNA strand where it exits the tetramer. Each RuvB hexamer is contacted by two RuvA subunits (via domain III) on 2 adjacent RuvB subunits; this complex drives branch migration. In the full resolvosome a probable DNA-RuvA(4)-RuvB(12)-RuvC(2) complex forms which resolves the HJ.

It is found in the cytoplasm. The enzyme catalyses ATP + H2O = ADP + phosphate + H(+). In terms of biological role, the RuvA-RuvB-RuvC complex processes Holliday junction (HJ) DNA during genetic recombination and DNA repair, while the RuvA-RuvB complex plays an important role in the rescue of blocked DNA replication forks via replication fork reversal (RFR). RuvA specifically binds to HJ cruciform DNA, conferring on it an open structure. The RuvB hexamer acts as an ATP-dependent pump, pulling dsDNA into and through the RuvAB complex. RuvB forms 2 homohexamers on either side of HJ DNA bound by 1 or 2 RuvA tetramers; 4 subunits per hexamer contact DNA at a time. Coordinated motions by a converter formed by DNA-disengaged RuvB subunits stimulates ATP hydrolysis and nucleotide exchange. Immobilization of the converter enables RuvB to convert the ATP-contained energy into a lever motion, pulling 2 nucleotides of DNA out of the RuvA tetramer per ATP hydrolyzed, thus driving DNA branch migration. The RuvB motors rotate together with the DNA substrate, which together with the progressing nucleotide cycle form the mechanistic basis for DNA recombination by continuous HJ branch migration. Branch migration allows RuvC to scan DNA until it finds its consensus sequence, where it cleaves and resolves cruciform DNA. The polypeptide is Holliday junction branch migration complex subunit RuvB (Moorella thermoacetica (strain ATCC 39073 / JCM 9320)).